Consider the following 114-residue polypeptide: Ferritin-like protein (114 aa).

The Fe cation site is built by E29, E59, and H62. Residues 86–114 are cargo-loading peptide; it reads FTDKPITEIEEETSGGSENTGGDLGIRKL. Residues 94-114 are disordered; sequence IEEETSGGSENTGGDLGIRKL. The span at 103 to 114 shows a compositional bias: gly residues; sequence ENTGGDLGIRKL.

Belongs to the ferritin-like superfamily. Probably forms a decamer which binds to the pentameric axis of the interior of the protein shell; as the Flp cargo protein is flexible, packing into the shell is not rigid. 3, 4 or 5 cargo decamers bind inside the encapulin nanocompartment. Requires Fe cation as cofactor.

It localises to the encapsulin nanocompartment. Functionally, cargo protein of a type 1 encapsulin nanocompartment. A ferritin-like protein that probably stores iron in the encapsulin nanocompartment. This is Ferritin-like protein from Thermotoga maritima (strain ATCC 43589 / DSM 3109 / JCM 10099 / NBRC 100826 / MSB8).